The chain runs to 211 residues: Protoglabretal synthase MOI1 (211 aa).

The next 5 helical transmembrane spans lie at 16 to 36, 50 to 70, 104 to 124, 135 to 155, and 179 to 199; these read ASLH…TWII, LICW…YYVF, VLGI…LAAY, IFQF…FLTA, and IWVI…HAIC. Positions 46–188 constitute an EXPERA domain; the sequence is IERLLICWWA…IWVIVPMLIA (143 aa).

Belongs to the EBP family. As to expression, expressed in maturing fruits and in juice vesicles.

It localises to the membrane. It carries out the reaction 7,8-epoxymelianol = protoglabretal. It participates in secondary metabolite biosynthesis; terpenoid biosynthesis. Functionally, isomerase involved in the biosynthesis of glabretanes triterpene natural products such as glabretal, a component with in vitro antiproliferative properties on lymphocytes. Catalyzes the conversion of 7,8-epoxymelianol to protoglabretal via skeletal rearrangements. This Citrus sinensis (Sweet orange) protein is Protoglabretal synthase MOI1.